The chain runs to 390 residues: MDIDEESYLNAGPSAPSKIPQGGEGDRLQGMSKKAMKRAAKQARLEEIKPLKRAAERERRRQRTAQLAEGYAAGTLSEADKELVERRRRVEKERKEAQRRIESGDQANDWLGGVVIDLGFDDLMTDQEIASMAQQLGYLYSSNRTAEKPVRTVIHTTFSPAASPRLWQRMENFNWHKWSRCHWWEQGLETLKSQLDPSTSILSVQSVVSKETQDKAGIDTKSLLSRLTGPQVPVDLQAGKHKLVYLSADAEDELLSLSEDEIYIIGGIVDRNRHKNLCQGKAEQLGIRTARLPIGTFLEMLPTRKVLTVNQVFDILVKYLHLGDWAAAFEAVIPIRKYAPGRKTKRAKTETKRNEKEEEEVECTSAEGEEDIGVIEESAEVDPEDVFSNQ.

Positions 1–72 are disordered; it reads MDIDEESYLN…RTAQLAEGYA (72 aa). Over residues 43-59 the composition is skewed to basic and acidic residues; sequence ARLEEIKPLKRAAERER. One can recognise an SAM-dependent MTase TRM10-type domain in the interval 92–340; sequence KERKEAQRRI…AVIPIRKYAP (249 aa). Residues 246 to 247, glycine 266, 270 to 274, cysteine 278, leucine 292, and 305 to 307 contribute to the S-adenosyl-L-methionine site; these read LS, DRNRH, and KVL. The active-site Proton acceptor is the aspartate 270. Residues 343 to 390 form a disordered region; sequence KTKRAKTETKRNEKEEEEVECTSAEGEEDIGVIEESAEVDPEDVFSNQ. The segment covering 347–356 has biased composition (basic and acidic residues); that stretch reads AKTETKRNEK. The span at 357–390 shows a compositional bias: acidic residues; the sequence is EEEEVECTSAEGEEDIGVIEESAEVDPEDVFSNQ.

This sequence belongs to the class IV-like SAM-binding methyltransferase superfamily. TRM10 family. Monomer.

Its subcellular location is the cytoplasm. The protein resides in the nucleus. The enzyme catalyses guanosine(9) in tRNA + S-adenosyl-L-methionine = N(1)-methylguanosine(9) in tRNA + S-adenosyl-L-homocysteine + H(+). Its function is as follows. S-adenosyl-L-methionine-dependent guanine N(1)-methyltransferase that catalyzes the formation of N(1)-methylguanine at position 9 (m1G9) in cytoplasmic tRNA. This chain is tRNA (guanine(9)-N1)-methyltransferase, found in Cryptococcus neoformans var. neoformans serotype D (strain JEC21 / ATCC MYA-565) (Filobasidiella neoformans).